We begin with the raw amino-acid sequence, 396 residues long: Ribosomal RNA large subunit methyltransferase I (396 aa).

The region spanning 2-79 is the PUA domain; sequence AIRIKLKPGR…REEEIDRAFF (78 aa).

This sequence belongs to the methyltransferase superfamily. RlmI family.

The protein localises to the cytoplasm. It catalyses the reaction cytidine(1962) in 23S rRNA + S-adenosyl-L-methionine = 5-methylcytidine(1962) in 23S rRNA + S-adenosyl-L-homocysteine + H(+). In terms of biological role, specifically methylates the cytosine at position 1962 (m5C1962) of 23S rRNA. The chain is Ribosomal RNA large subunit methyltransferase I from Shewanella putrefaciens (strain CN-32 / ATCC BAA-453).